The sequence spans 86 residues: Large ribosomal subunit protein uL23 (86 aa).

The protein belongs to the universal ribosomal protein uL23 family. In terms of assembly, part of the 50S ribosomal subunit. Contacts protein L29.

In terms of biological role, binds to 23S rRNA. One of the proteins that surrounds the polypeptide exit tunnel on the outside of the ribosome. The chain is Large ribosomal subunit protein uL23 from Methanococcus maripaludis (strain C7 / ATCC BAA-1331).